The sequence spans 355 residues: Putative arylamide transporter (355 aa).

6 helical membrane-spanning segments follow: residues 22–42 (TVLW…YLTH), 44–64 (VFNH…MSAT), 71–91 (RAQQ…GVHA), 92–112 (LLGS…SVAV), 119–139 (VAQG…VLVF), and 150–170 (LFDA…LFPP).

Its subcellular location is the cell membrane. Functionally, may be involved in the import of arylamide compounds. The polypeptide is Putative arylamide transporter (Mycobacterium bovis (strain ATCC BAA-935 / AF2122/97)).